The primary structure comprises 316 residues: 4-hydroxy-3-methylbut-2-enyl diphosphate reductase (316 aa).

Residue C12 participates in [4Fe-4S] cluster binding. Residues H41 and H74 each contribute to the (2E)-4-hydroxy-3-methylbut-2-enyl diphosphate site. Positions 41 and 74 each coordinate dimethylallyl diphosphate. Positions 41 and 74 each coordinate isopentenyl diphosphate. C96 is a [4Fe-4S] cluster binding site. H124 is a binding site for (2E)-4-hydroxy-3-methylbut-2-enyl diphosphate. Residue H124 coordinates dimethylallyl diphosphate. H124 lines the isopentenyl diphosphate pocket. The Proton donor role is filled by E126. T167 is a binding site for (2E)-4-hydroxy-3-methylbut-2-enyl diphosphate. C197 is a [4Fe-4S] cluster binding site. Positions 225, 226, 227, and 269 each coordinate (2E)-4-hydroxy-3-methylbut-2-enyl diphosphate. Residues S225, S226, N227, and S269 each contribute to the dimethylallyl diphosphate site. Residues S225, S226, N227, and S269 each contribute to the isopentenyl diphosphate site.

The protein belongs to the IspH family. In terms of assembly, homodimer. The cofactor is [4Fe-4S] cluster.

The catalysed reaction is isopentenyl diphosphate + 2 oxidized [2Fe-2S]-[ferredoxin] + H2O = (2E)-4-hydroxy-3-methylbut-2-enyl diphosphate + 2 reduced [2Fe-2S]-[ferredoxin] + 2 H(+). It catalyses the reaction dimethylallyl diphosphate + 2 oxidized [2Fe-2S]-[ferredoxin] + H2O = (2E)-4-hydroxy-3-methylbut-2-enyl diphosphate + 2 reduced [2Fe-2S]-[ferredoxin] + 2 H(+). It participates in isoprenoid biosynthesis; dimethylallyl diphosphate biosynthesis; dimethylallyl diphosphate from (2E)-4-hydroxy-3-methylbutenyl diphosphate: step 1/1. It functions in the pathway isoprenoid biosynthesis; isopentenyl diphosphate biosynthesis via DXP pathway; isopentenyl diphosphate from 1-deoxy-D-xylulose 5-phosphate: step 6/6. Functionally, catalyzes the conversion of 1-hydroxy-2-methyl-2-(E)-butenyl 4-diphosphate (HMBPP) into a mixture of isopentenyl diphosphate (IPP) and dimethylallyl diphosphate (DMAPP). Acts in the terminal step of the DOXP/MEP pathway for isoprenoid precursor biosynthesis. The polypeptide is 4-hydroxy-3-methylbut-2-enyl diphosphate reductase (Enterobacter sp. (strain 638)).